A 288-amino-acid chain; its full sequence is Pantothenate synthetase (288 aa).

30–37 (MGALHEGH) is a binding site for ATP. Residue histidine 37 is the Proton donor of the active site. Glutamine 61 is a (R)-pantoate binding site. Glutamine 61 lines the beta-alanine pocket. 147–150 (GEKD) contributes to the ATP binding site. A (R)-pantoate-binding site is contributed by glutamine 153. ATP-binding positions include leucine 176 and 184–187 (ISSR).

It belongs to the pantothenate synthetase family. As to quaternary structure, homodimer.

It localises to the cytoplasm. The catalysed reaction is (R)-pantoate + beta-alanine + ATP = (R)-pantothenate + AMP + diphosphate + H(+). The protein operates within cofactor biosynthesis; (R)-pantothenate biosynthesis; (R)-pantothenate from (R)-pantoate and beta-alanine: step 1/1. Catalyzes the condensation of pantoate with beta-alanine in an ATP-dependent reaction via a pantoyl-adenylate intermediate. This Prosthecochloris aestuarii (strain DSM 271 / SK 413) protein is Pantothenate synthetase.